A 397-amino-acid chain; its full sequence is Guanine nucleotide-binding protein G(s) subunit alpha (397 aa).

Residues 1 to 23 (MGCLGNSKTEDQRNEEKAQREAN) are disordered. Residue Gly2 is the site of N-palmitoyl glycine attachment. The S-palmitoyl cysteine moiety is linked to residue Cys3. Positions 8-23 (KTEDQRNEEKAQREAN) are enriched in basic and acidic residues. The G-alpha domain maps to 39–397 (ATHRLLLLGA…RMHLRQYELL (359 aa)). Residues 42–55 (RLLLLGAGESGKST) are G1 motif. GTP contacts are provided by residues 47-55 (GAGESGKST), 182-189 (LLRCRVLT), 208-212 (DVGGQ), 277-280 (NKQD), and Ala369. Ser54 and Thr189 together coordinate Mg(2+). Residues 181 to 189 (DLLRCRVLT) form a G2 motif region. The interval 204-213 (FHMFDVGGQR) is G3 motif. The interval 273–280 (ILFLNKQD) is G4 motif. The G5 motif stretch occupies residues 367–372 (TCAVDT).

This sequence belongs to the G-alpha family. G(s) subfamily. As to quaternary structure, heterotrimeric G proteins are composed of 3 units; alpha, beta and gamma. The alpha chain contains the guanine nucleotide binding site. Interacts with CRY1; the interaction may block GPCR-mediated regulation of cAMP concentrations. Interacts with ADCY6 and stimulates its adenylyl cyclase activity. Interacts with ADCY2 and ADCY5. Stimulates the ADCY5 adenylyl cyclase activity. Interaction with SASH1.

The protein localises to the cell membrane. Its function is as follows. Guanine nucleotide-binding proteins (G proteins) function as transducers in numerous signaling pathways controlled by G protein-coupled receptors (GPCRs). Signaling involves the activation of adenylyl cyclases, resulting in increased levels of the signaling molecule cAMP. GNAS functions downstream of several GPCRs, including beta-adrenergic receptors. Stimulates the Ras signaling pathway via RAPGEF2. This chain is Guanine nucleotide-binding protein G(s) subunit alpha (GNAS), found in Sus scrofa (Pig).